The primary structure comprises 444 residues: Na(+)-translocating NADH-quinone reductase subunit A (444 aa).

Belongs to the NqrA family. Composed of six subunits; NqrA, NqrB, NqrC, NqrD, NqrE and NqrF.

The catalysed reaction is a ubiquinone + n Na(+)(in) + NADH + H(+) = a ubiquinol + n Na(+)(out) + NAD(+). Functionally, NQR complex catalyzes the reduction of ubiquinone-1 to ubiquinol by two successive reactions, coupled with the transport of Na(+) ions from the cytoplasm to the periplasm. NqrA to NqrE are probably involved in the second step, the conversion of ubisemiquinone to ubiquinol. This is Na(+)-translocating NADH-quinone reductase subunit A from Shewanella denitrificans (strain OS217 / ATCC BAA-1090 / DSM 15013).